The chain runs to 168 residues: Small ribosomal subunit protein uS5c (168 aa).

Residues 17 to 80 (WQERVVQIRR…SDGKKKIVSV (64 aa)) form the S5 DRBM domain.

This sequence belongs to the universal ribosomal protein uS5 family. As to quaternary structure, part of the 30S ribosomal subunit. Contacts protein S4.

It localises to the plastid. It is found in the chloroplast. Its function is as follows. With S4 and S12 plays an important role in translational accuracy. The protein is Small ribosomal subunit protein uS5c (rps5) of Rhodomonas salina (Cryptomonas salina).